The following is a 256-amino-acid chain: Protein FixA (256 aa).

The protein belongs to the ETF beta-subunit/FixA family. As to quaternary structure, heterodimer of FixA and FixB.

It functions in the pathway amine and polyamine metabolism; carnitine metabolism. Functionally, required for anaerobic carnitine reduction. May bring reductant to CaiA. The protein is Protein FixA of Escherichia coli O81 (strain ED1a).